A 200-amino-acid chain; its full sequence is 3-isopropylmalate dehydratase small subunit (200 aa).

The protein belongs to the LeuD family. LeuD type 1 subfamily. Heterodimer of LeuC and LeuD.

It carries out the reaction (2R,3S)-3-isopropylmalate = (2S)-2-isopropylmalate. The protein operates within amino-acid biosynthesis; L-leucine biosynthesis; L-leucine from 3-methyl-2-oxobutanoate: step 2/4. In terms of biological role, catalyzes the isomerization between 2-isopropylmalate and 3-isopropylmalate, via the formation of 2-isopropylmaleate. The chain is 3-isopropylmalate dehydratase small subunit from Photobacterium profundum (strain SS9).